A 422-amino-acid chain; its full sequence is Glucose-1-phosphate adenylyltransferase (422 aa).

Alpha-D-glucose 1-phosphate contacts are provided by residues Tyr-110, Gly-175, Glu-190 to Lys-191, and Ser-208.

This sequence belongs to the bacterial/plant glucose-1-phosphate adenylyltransferase family. As to quaternary structure, homotetramer.

It carries out the reaction alpha-D-glucose 1-phosphate + ATP + H(+) = ADP-alpha-D-glucose + diphosphate. The protein operates within glycan biosynthesis; glycogen biosynthesis. Involved in the biosynthesis of ADP-glucose, a building block required for the elongation reactions to produce glycogen. Catalyzes the reaction between ATP and alpha-D-glucose 1-phosphate (G1P) to produce pyrophosphate and ADP-Glc. The sequence is that of Glucose-1-phosphate adenylyltransferase from Hydrogenovibrio crunogenus (strain DSM 25203 / XCL-2) (Thiomicrospira crunogena).